The following is a 91-amino-acid chain: Small ribosomal subunit protein uS15 (91 aa).

It belongs to the universal ribosomal protein uS15 family. As to quaternary structure, part of the 30S ribosomal subunit. Forms a bridge to the 50S subunit in the 70S ribosome, contacting the 23S rRNA.

Functionally, one of the primary rRNA binding proteins, it binds directly to 16S rRNA where it helps nucleate assembly of the platform of the 30S subunit by binding and bridging several RNA helices of the 16S rRNA. Its function is as follows. Forms an intersubunit bridge (bridge B4) with the 23S rRNA of the 50S subunit in the ribosome. This Cytophaga hutchinsonii (strain ATCC 33406 / DSM 1761 / CIP 103989 / NBRC 15051 / NCIMB 9469 / D465) protein is Small ribosomal subunit protein uS15.